The primary structure comprises 184 residues: Photosystem I assembly protein Ycf4 (184 aa).

The next 2 membrane-spanning stretches (helical) occupy residues 19-39 (ISNL…VLVG) and 57-77 (IIFF…LFIS).

Belongs to the Ycf4 family.

The protein resides in the plastid thylakoid membrane. Functionally, seems to be required for the assembly of the photosystem I complex. The polypeptide is Photosystem I assembly protein Ycf4 (Cuscuta reflexa (Southern Asian dodder)).